The sequence spans 257 residues: UPF0246 protein Shewmr4_2963 (257 aa).

It belongs to the UPF0246 family.

In Shewanella sp. (strain MR-4), this protein is UPF0246 protein Shewmr4_2963.